The primary structure comprises 321 residues: Putative membrane-bound redox modulator Alx (321 aa).

Topologically, residues 1 to 6 (MNTVGT) are periplasmic. A helical transmembrane segment spans residues 7–27 (PLLWGGFAVVVAIMLAIDLLL). The Cytoplasmic portion of the chain corresponds to 28–43 (QGRRGAHAMTMKQAAA). Residues 44–64 (WSLVWVTLSLLFNAAFWWYLV) form a helical membrane-spanning segment. Over 65–89 (QTEGRAVADPQALAFLTGYLIEKSL) the chain is Periplasmic. The helical transmembrane segment at 90–110 (AVDNVFVWLMLFSYFSVPAAL) threads the bilayer. At 111–113 (QRR) the chain is on the cytoplasmic side. Residues 114–134 (VLVYGVLGAIVLRTIMIFTGS) traverse the membrane as a helical segment. Residue tryptophan 135 is a topological domain, periplasmic. Residues 136–156 (LISQFDWILYIFGAFLLFTGV) traverse the membrane as a helical segment. The Cytoplasmic segment spans residues 157 to 198 (KMALAHEDESGIGDKPLVRWLRGHLRMTDTIDNEHFFVRKNG). The chain crosses the membrane as a helical span at residues 199–219 (LLYATPLMLVLILVELSDVIF). Residues 220–225 (AVDSIP) are Periplasmic-facing. The helical transmembrane segment at 226 to 246 (AIFAVTTDPFIVLTSNLFAIL) threads the bilayer. Residues 247–261 (GLRAMYFLLAGVAER) lie on the Cytoplasmic side of the membrane. Residues 262-282 (FSMLKYGLAVILVFIGIKMLI) traverse the membrane as a helical segment. Residues 283–286 (VDFY) lie on the Periplasmic side of the membrane. The helical transmembrane segment at 287–307 (HIPIAVSLGVVFGILVMTFII) threads the bilayer. Residues 308–321 (NAWVNYRHDKQRGG) lie on the Cytoplasmic side of the membrane.

Belongs to the TerC family.

It localises to the cell inner membrane. In terms of biological role, has been proposed to be a redox modulator. This Escherichia coli (strain K12) protein is Putative membrane-bound redox modulator Alx.